A 320-amino-acid chain; its full sequence is Methylenetetrahydrofolate dehydrogenase [NAD(+)] (320 aa).

Cys152 is an active-site residue. NAD(+)-binding positions include 187-188 (RS) and 210-211 (DI).

Belongs to the tetrahydrofolate dehydrogenase/cyclohydrolase family. Homodimer.

The protein resides in the cytoplasm. Its subcellular location is the nucleus. It carries out the reaction (6R)-5,10-methylene-5,6,7,8-tetrahydrofolate + NAD(+) = (6R)-5,10-methenyltetrahydrofolate + NADH. It participates in one-carbon metabolism; tetrahydrofolate interconversion. Functionally, catalyzes oxidation of cytoplasmic one-carbon units for purine biosynthesis. The protein is Methylenetetrahydrofolate dehydrogenase [NAD(+)] (mtd1) of Schizosaccharomyces pombe (strain 972 / ATCC 24843) (Fission yeast).